The following is a 330-amino-acid chain: Cytoplasmic envelopment protein 2 (330 aa).

This sequence belongs to the herpesviridae cytoplasmic envelopment protein 2 family. As to quaternary structure, interacts with cytoplasmic envelopment protein 3 and with the capsid.

The protein localises to the virion tegument. It is found in the host cytoplasm. Its subcellular location is the host nucleus. In terms of biological role, plays a critical role in cytoplasmic virus egress. Participates in the final step of tegumentation and envelope acquisition within the host cytoplasm by directly interacting with the capsid. Upon virion binding to target cell, a signaling cascade is triggered to disrupt the interaction with the capsid, thereby preparing capsid uncoating. This chain is Cytoplasmic envelopment protein 2 (33), found in Saimiriine herpesvirus 2 (strain 11) (SaHV-2).